Here is a 446-residue protein sequence, read N- to C-terminus: Exodeoxyribonuclease 7 large subunit (446 aa).

It belongs to the XseA family. In terms of assembly, heterooligomer composed of large and small subunits.

Its subcellular location is the cytoplasm. The enzyme catalyses Exonucleolytic cleavage in either 5'- to 3'- or 3'- to 5'-direction to yield nucleoside 5'-phosphates.. Bidirectionally degrades single-stranded DNA into large acid-insoluble oligonucleotides, which are then degraded further into small acid-soluble oligonucleotides. This Streptococcus pneumoniae (strain ATCC 700669 / Spain 23F-1) protein is Exodeoxyribonuclease 7 large subunit.